Here is a 553-residue protein sequence, read N- to C-terminus: Probable glucomannan 4-beta-mannosyltransferase 1 (553 aa).

Residues 64–84 (LLPVFKGLVVMCLVLSIIVFF) form a helical membrane-spanning segment. Aspartate 163 is an active-site residue. The substrate site is built by aspartate 222 and aspartate 224. The active site involves aspartate 316. 4 helical membrane-spanning segments follow: residues 395–415 (VAVH…SVFF), 431–451 (LISI…IFWV), 510–530 (EVMV…YGHT), and 531–551 (WLHF…FGFV).

It belongs to the glycosyltransferase 2 family. Plant cellulose synthase-like A subfamily.

Its subcellular location is the golgi apparatus membrane. The enzyme catalyses GDP-mannose + (glucomannan)n = GDP + (glucomannan)n+1.. In terms of biological role, probable mannan synthase which consists of a 4-beta-mannosyltransferase activity on mannan using GDP-mannose. The beta-1,4-mannan product is the backbone for galactomannan synthesis by galactomannan galactosyltransferase. Galactomannan is a noncellulosic polysaccharides of plant cell wall. This is Probable glucomannan 4-beta-mannosyltransferase 1 from Arabidopsis thaliana (Mouse-ear cress).